The primary structure comprises 184 residues: MVKELISSAEDHMKKSVDVVRREFASLRAGRATPSILDKVTVSYYGTPTPLNQLANISVPEARVLVIQPWDKSVIPEVEKAILKSDVGITPSSDGTVIRLIIPQLTQERRTELVKVIKKKAEEGRVAVRNIRRDTNDSIKAKQKDGIPEDEAKRGQDELQKLTDKYVKEIDEMVKAKEQEIMQV.

Residues 137–158 form a disordered region; sequence DSIKAKQKDGIPEDEAKRGQDE.

It belongs to the RRF family.

It localises to the cytoplasm. Responsible for the release of ribosomes from messenger RNA at the termination of protein biosynthesis. May increase the efficiency of translation by recycling ribosomes from one round of translation to another. In Desulforamulus reducens (strain ATCC BAA-1160 / DSM 100696 / MI-1) (Desulfotomaculum reducens), this protein is Ribosome-recycling factor.